Consider the following 248-residue polypeptide: MTEANRILLGVNIDHVATLRQARGTRYPDPLKAALDAEEAGADGITVHLREDRRHIQERDVRVLKEVLQTRMNFEMGVTEEMLAFAELIRPAHACFVPETRQELTTEGGLDVAGQEARIRAAVERLARIGCEVSLFIDAEPQQIEAAARIGAPAVELHTGRYADARTPAETARELARIRDGVEYGLSHGLIVNAGHGLHYHNVEPVAAIPGMHELNIGHAIVAHALFVGFKAAVQEMKLLMVGAASRR.

Position 12 (asparagine 12) interacts with 3-amino-2-oxopropyl phosphate. Residue 14–15 (DH) participates in 1-deoxy-D-xylulose 5-phosphate binding. A 3-amino-2-oxopropyl phosphate-binding site is contributed by arginine 23. Residue histidine 48 is the Proton acceptor of the active site. 1-deoxy-D-xylulose 5-phosphate is bound by residues arginine 50 and histidine 55. The active-site Proton acceptor is glutamate 75. Threonine 105 lines the 1-deoxy-D-xylulose 5-phosphate pocket. The Proton donor role is filled by histidine 196. 3-amino-2-oxopropyl phosphate-binding positions include glycine 197 and 218–219 (GH).

This sequence belongs to the PNP synthase family. In terms of assembly, homooctamer; tetramer of dimers.

The protein resides in the cytoplasm. It carries out the reaction 3-amino-2-oxopropyl phosphate + 1-deoxy-D-xylulose 5-phosphate = pyridoxine 5'-phosphate + phosphate + 2 H2O + H(+). Its pathway is cofactor biosynthesis; pyridoxine 5'-phosphate biosynthesis; pyridoxine 5'-phosphate from D-erythrose 4-phosphate: step 5/5. In terms of biological role, catalyzes the complicated ring closure reaction between the two acyclic compounds 1-deoxy-D-xylulose-5-phosphate (DXP) and 3-amino-2-oxopropyl phosphate (1-amino-acetone-3-phosphate or AAP) to form pyridoxine 5'-phosphate (PNP) and inorganic phosphate. This Azotobacter vinelandii (strain DJ / ATCC BAA-1303) protein is Pyridoxine 5'-phosphate synthase.